The sequence spans 1481 residues: Structural protein ORF147 (1481 aa).

Disordered regions lie at residues A65–E88 and D1319–P1403. 3 stretches are compositionally biased toward low complexity: residues K73–S84, S1323–T1336, and S1393–P1403.

The protein localises to the virion. The chain is Structural protein ORF147 from Noctuidae (owlet moths).